Consider the following 265-residue polypeptide: Phosphatidylserine decarboxylase proenzyme (265 aa).

The Schiff-base intermediate with substrate; via pyruvic acid role is filled by serine 183. Serine 183 carries the pyruvic acid (Ser); by autocatalysis modification. The segment at 218-242 (PQIESEPESEPALQTAPVETAANPS) is disordered.

The protein belongs to the phosphatidylserine decarboxylase family. PSD-A subfamily. As to quaternary structure, heterodimer of a large membrane-associated beta subunit and a small pyruvoyl-containing alpha subunit. The cofactor is pyruvate. In terms of processing, is synthesized initially as an inactive proenzyme. Formation of the active enzyme involves a self-maturation process in which the active site pyruvoyl group is generated from an internal serine residue via an autocatalytic post-translational modification. Two non-identical subunits are generated from the proenzyme in this reaction, and the pyruvate is formed at the N-terminus of the alpha chain, which is derived from the carboxyl end of the proenzyme. The post-translation cleavage follows an unusual pathway, termed non-hydrolytic serinolysis, in which the side chain hydroxyl group of the serine supplies its oxygen atom to form the C-terminus of the beta chain, while the remainder of the serine residue undergoes an oxidative deamination to produce ammonia and the pyruvoyl prosthetic group on the alpha chain.

It localises to the cell membrane. The catalysed reaction is a 1,2-diacyl-sn-glycero-3-phospho-L-serine + H(+) = a 1,2-diacyl-sn-glycero-3-phosphoethanolamine + CO2. The protein operates within phospholipid metabolism; phosphatidylethanolamine biosynthesis; phosphatidylethanolamine from CDP-diacylglycerol: step 2/2. In terms of biological role, catalyzes the formation of phosphatidylethanolamine (PtdEtn) from phosphatidylserine (PtdSer). In Neisseria meningitidis serogroup C (strain 053442), this protein is Phosphatidylserine decarboxylase proenzyme.